Consider the following 140-residue polypeptide: Gonadotropin subunit beta-2 (140 aa).

Residues 1 to 23 (MSVPASSFLLLCFLMNSFSPAQS) form the signal peptide. 6 disulfides stabilise this stretch: C29–C77, C43–C92, C46–C130, C54–C108, C58–C110, and C113–C120. An N-linked (GlcNAc...) asparagine glycan is attached at N33.

It belongs to the glycoprotein hormones subunit beta family. As to quaternary structure, heterodimer of an alpha and a beta chain.

It is found in the secreted. Functionally, involved in gametogenesis and steroidogenesis. The protein is Gonadotropin subunit beta-2 (cgbb) of Ictalurus punctatus (Channel catfish).